The sequence spans 248 residues: Probable transcriptional regulatory protein Mchl_0946 (248 aa).

Belongs to the TACO1 family.

It is found in the cytoplasm. The chain is Probable transcriptional regulatory protein Mchl_0946 from Methylorubrum extorquens (strain CM4 / NCIMB 13688) (Methylobacterium extorquens).